A 278-amino-acid polypeptide reads, in one-letter code: Envelope glycoprotein L (278 aa).

Residues 1-30 (MCRRPDCGFSFSPGPVVLLWCCLLLPIVSS) form the signal peptide. The 214-residue stretch at 43-256 (VPAECPELTR…DKYYAGLPPE (214 aa)) folds into the gL betaherpesvirus-type domain. A disulfide bridge connects residues C154 and C159.

This sequence belongs to the herpesviridae glycoprotein L (gL) family. Betaherpesvirinae gL subfamily. Interacts with glycoprotein H (gH); this interaction is necessary for the correct processing and cell surface expression of gH. Forms the envelope pentamer complex (PC) composed of gH, gL, UL128, UL130, and UL131A. The pentamer interacts with host NRP2. Forms the envelope trimer complex composed of gH, gL, and gO. The trimer interacts with host PDGFRA.

It is found in the virion membrane. The protein resides in the host cell membrane. It localises to the host Golgi apparatus. Its subcellular location is the host trans-Golgi network. Its function is as follows. The heterodimer glycoprotein H-glycoprotein L is required for the fusion of viral and plasma membranes leading to virus entry into the host cell. Acts as a functional inhibitor of gH and maintains gH in an inhibited form. Upon binding to host integrins, gL dissociates from gH leading to activation of the viral fusion glycoproteins gB and gH. In human cytomegalovirus, forms two distincts complexes to mediate viral entry, a trimer and a pentamer at the surface of the virion envelope. The gH-gL-gO trimer is required for infection in fibroblasts by interacting with host PDGFRA. The gH-gL-UL128-UL130-UL131A pentamer is essential for viral entry in epithelial, endothelial and myeloid cells via interaction with host NRP2. This is Envelope glycoprotein L from Human cytomegalovirus (strain AD169) (HHV-5).